Reading from the N-terminus, the 130-residue chain is Small ribosomal subunit protein uS9 (130 aa).

The tract at residues 99-130 (KSAGMLTRDPRMKERKKPGLKKARKASQFSKR) is disordered. Positions 111–130 (KERKKPGLKKARKASQFSKR) are enriched in basic residues.

Belongs to the universal ribosomal protein uS9 family.

The polypeptide is Small ribosomal subunit protein uS9 (Latilactobacillus sakei subsp. sakei (strain 23K) (Lactobacillus sakei subsp. sakei)).